A 1031-amino-acid chain; its full sequence is Beta-galactosidase (1031 aa).

The substrate site is built by N98 and D197. D197 contacts Na(+). Mg(2+) contacts are provided by E412, H414, and E457. Substrate-binding positions include E457 and 533–536 (EYAH). E457 functions as the Proton donor in the catalytic mechanism. E533 acts as the Nucleophile in catalysis. N593 lines the Mg(2+) pocket. Residues F597 and D600 each contribute to the Na(+) site. Substrate contacts are provided by D600 and W1005.

This sequence belongs to the glycosyl hydrolase 2 family. In terms of assembly, homotetramer. It depends on Mg(2+) as a cofactor. Na(+) serves as cofactor.

The enzyme catalyses Hydrolysis of terminal non-reducing beta-D-galactose residues in beta-D-galactosides.. This is Beta-galactosidase from Oenococcus oeni (strain ATCC BAA-331 / PSU-1).